The sequence spans 341 residues: Adenine deaminase (341 aa).

3 residues coordinate Zn(2+): H24, H26, and H204. Catalysis depends on E207, which acts as the Proton donor. Residue D285 participates in Zn(2+) binding. D286 contacts substrate.

The protein belongs to the metallo-dependent hydrolases superfamily. Adenosine and AMP deaminases family. Adenine deaminase type 2 subfamily. Zn(2+) is required as a cofactor.

It carries out the reaction adenine + H2O + H(+) = hypoxanthine + NH4(+). In terms of biological role, catalyzes the hydrolytic deamination of adenine to hypoxanthine. Plays an important role in the purine salvage pathway and in nitrogen catabolism. This is Adenine deaminase from Sphingopyxis alaskensis (strain DSM 13593 / LMG 18877 / RB2256) (Sphingomonas alaskensis).